The primary structure comprises 320 residues: Probable cysteine protease atg4 (320 aa).

Cysteine 74 serves as the catalytic Nucleophile. Residues aspartate 232 and histidine 234 contribute to the active site.

This sequence belongs to the peptidase C54 family.

Its subcellular location is the cytoplasm. It localises to the nucleus. The protein localises to the preautophagosomal structure. The enzyme catalyses [protein]-C-terminal L-amino acid-glycyl-phosphatidylethanolamide + H2O = [protein]-C-terminal L-amino acid-glycine + a 1,2-diacyl-sn-glycero-3-phosphoethanolamine. Its function is as follows. Cysteine protease that plays a key role in cytoplasm to vacuole transport (Cvt) and autophagy by mediating both proteolytic activation and delipidation of atg8. Required for selective autophagic degradation of the nucleus (nucleophagy) as well as for mitophagy which contributes to regulate mitochondrial quantity and quality by eliminating the mitochondria to a basal level to fulfill cellular energy requirements and preventing excess ROS production. The protease activity is required for proteolytic activation of atg8: cleaves the C-terminal amino acid of atg8 to reveal a C-terminal glycine. Atg8 ubiquitin-like activity requires the exposure of the glycine at the C-terminus for its conjugation to phosphatidylethanolamine (PE) and its insertion to membranes, which is necessary for autophagy. The atg8-PE conjugate mediates tethering between adjacent membranes and stimulates membrane hemifusion, leading to expansion of the autophagosomal membrane during autophagy. In addition to the protease activity, also catalyzes deconjugation of PE-conjugated forms of atg8 during macroautophagy: atg8 delipidation is required to release the protein from membranes, which facilitates multiple events during macroautophagy, and especially for efficient autophagosome biogenesis, the assembly of atg9-containing tubulovesicular clusters into phagophores/autophagosomes, and for the disassembly of PAS-associated ATG components. Atg8 delipidation by atg4 also recycles atg8-PE generated on inappropriate membranes to maintain a reservoir of unlipidated atg8 that is required for autophagosome formation at the PAS. Plays a role in meiosis and sporulation. The sequence is that of Probable cysteine protease atg4 (atg4) from Schizosaccharomyces pombe (strain 972 / ATCC 24843) (Fission yeast).